The sequence spans 217 residues: tRNA (guanine-N(7)-)-methyltransferase (217 aa).

S-adenosyl-L-methionine is bound by residues E44, E69, D96, and D118. Residue D118 is part of the active site. Residues K122, D154, and 191–194 contribute to the substrate site; that span reads TEYE.

It belongs to the class I-like SAM-binding methyltransferase superfamily. TrmB family.

The enzyme catalyses guanosine(46) in tRNA + S-adenosyl-L-methionine = N(7)-methylguanosine(46) in tRNA + S-adenosyl-L-homocysteine. The protein operates within tRNA modification; N(7)-methylguanine-tRNA biosynthesis. Functionally, catalyzes the formation of N(7)-methylguanine at position 46 (m7G46) in tRNA. This chain is tRNA (guanine-N(7)-)-methyltransferase, found in Bacillus anthracis (strain CDC 684 / NRRL 3495).